Consider the following 147-residue polypeptide: Globin (147 aa).

In terms of domain architecture, Globin spans S2–Q147. H64 and H95 together coordinate heme b.

Belongs to the globin family. Homodimer or homooligomer.

This is Globin from Aequiyoldia eightsii (Antarctic yoldia).